A 469-amino-acid chain; its full sequence is 3-isopropylmalate dehydratase large subunit (469 aa).

The [4Fe-4S] cluster site is built by Cys350, Cys410, and Cys413.

Belongs to the aconitase/IPM isomerase family. LeuC type 1 subfamily. In terms of assembly, heterodimer of LeuC and LeuD. [4Fe-4S] cluster serves as cofactor.

It carries out the reaction (2R,3S)-3-isopropylmalate = (2S)-2-isopropylmalate. The protein operates within amino-acid biosynthesis; L-leucine biosynthesis; L-leucine from 3-methyl-2-oxobutanoate: step 2/4. In terms of biological role, catalyzes the isomerization between 2-isopropylmalate and 3-isopropylmalate, via the formation of 2-isopropylmaleate. The polypeptide is 3-isopropylmalate dehydratase large subunit (Rhodopseudomonas palustris (strain TIE-1)).